The sequence spans 299 residues: Probable lipid kinase YegS (299 aa).

Residues alanine 2–threonine 133 enclose the DAGKc domain. ATP is bound by residues threonine 40, glycine 66–glutamate 72, and threonine 95. Residues leucine 215, aspartate 218, and leucine 220 each contribute to the Mg(2+) site. The Proton acceptor role is filled by glutamate 271.

It belongs to the diacylglycerol/lipid kinase family. YegS lipid kinase subfamily. Mg(2+) is required as a cofactor. The cofactor is Ca(2+).

It localises to the cytoplasm. Functionally, probably phosphorylates lipids; the in vivo substrate is unknown. The chain is Probable lipid kinase YegS from Escherichia coli O127:H6 (strain E2348/69 / EPEC).